The sequence spans 313 residues: MSHSVIKVSASAMEQMKQSYAGSLTPAVPQGAVFQAKPPGCTITAYRSGKVLFQGKNAGTEAARWGTAEAPKAKKTVKKAADPLYAPPAGIASMSVIGSDEVGTGDYFGPITVACAYADKTKLSLMKELGVKDSKDLKDPQIIEIAKLLIKTIPYSLLVLKNEKYNQMQEKGMSQGKMKALLHNQAISNLLRKMNGVKPEAILIDQFAEPGIYFKHLSGRDIVKEKTFFSTKAESIHLSVAAASIIARYSFLIEMDKLSREAGMTIPKGAGPHVDEAAAKLIINKGEGALRTFTKLHFANTQKAKRLVERKRS.

An RNase H type-2 domain is found at 94–310; the sequence is MSVIGSDEVG…TQKAKRLVER (217 aa). The a divalent metal cation site is built by Asp100, Glu101, and Asp205.

This sequence belongs to the RNase HII family. RnhC subfamily. Requires Mn(2+) as cofactor. Mg(2+) is required as a cofactor.

The protein localises to the cytoplasm. The catalysed reaction is Endonucleolytic cleavage to 5'-phosphomonoester.. Functionally, endonuclease that specifically degrades the RNA of RNA-DNA hybrids. The protein is Ribonuclease HIII of Bacillus velezensis (strain DSM 23117 / BGSC 10A6 / LMG 26770 / FZB42) (Bacillus amyloliquefaciens subsp. plantarum).